A 70-amino-acid polypeptide reads, in one-letter code: Kappa-scoloptoxin(07)-Ssm2b (70 aa).

An N-terminal signal peptide occupies residues 1–19 (MLVFYALLFVSVFSSTVMG). Residues 20–39 (ATIDKPILREAIEEIDVNKR) constitute a propeptide that is removed on maturation.

The protein belongs to the scoloptoxin-07 family. Contains 3 disulfide bonds. In terms of tissue distribution, expressed by the venom gland.

The protein localises to the secreted. Functionally, inhibits voltage-gated potassium channels. The chain is Kappa-scoloptoxin(07)-Ssm2b from Scolopendra mutilans (Chinese red-headed centipede).